The following is a 289-amino-acid chain: Ribosomal RNA small subunit methyltransferase A (289 aa).

6 residues coordinate S-adenosyl-L-methionine: N28, L30, G55, E76, D101, and N125.

The protein belongs to the class I-like SAM-binding methyltransferase superfamily. rRNA adenine N(6)-methyltransferase family. RsmA subfamily.

The protein localises to the cytoplasm. The enzyme catalyses adenosine(1518)/adenosine(1519) in 16S rRNA + 4 S-adenosyl-L-methionine = N(6)-dimethyladenosine(1518)/N(6)-dimethyladenosine(1519) in 16S rRNA + 4 S-adenosyl-L-homocysteine + 4 H(+). Specifically dimethylates two adjacent adenosines (A1518 and A1519) in the loop of a conserved hairpin near the 3'-end of 16S rRNA in the 30S particle. May play a critical role in biogenesis of 30S subunits. This is Ribosomal RNA small subunit methyltransferase A from Clostridioides difficile (strain 630) (Peptoclostridium difficile).